A 96-amino-acid polypeptide reads, in one-letter code: Teretoxin Tan6.14 (96 aa).

A signal peptide spans 1–21; sequence MRPLLVFVLMVSVSLAFSLEG. The propeptide occupies 22-60; sequence MPNNGGDSVASITANQARRFKRNPLFSFAQHSLVDLKAR.

Post-translationally, contains 3 disulfide bonds. As to expression, expressed by the venom duct.

It is found in the secreted. The polypeptide is Teretoxin Tan6.14 (Terebra anilis (Auger snail)).